The sequence spans 691 residues: Elongation factor G (691 aa).

A tr-type G domain is found at 8–283 (EDYRNIGIMA…AVVDFLPSPL (276 aa)). GTP-binding positions include 17 to 24 (AHIDAGKT), 81 to 85 (DTPGH), and 135 to 138 (NKMD).

Belongs to the TRAFAC class translation factor GTPase superfamily. Classic translation factor GTPase family. EF-G/EF-2 subfamily.

Its subcellular location is the cytoplasm. Catalyzes the GTP-dependent ribosomal translocation step during translation elongation. During this step, the ribosome changes from the pre-translocational (PRE) to the post-translocational (POST) state as the newly formed A-site-bound peptidyl-tRNA and P-site-bound deacylated tRNA move to the P and E sites, respectively. Catalyzes the coordinated movement of the two tRNA molecules, the mRNA and conformational changes in the ribosome. This chain is Elongation factor G, found in Parvibaculum lavamentivorans (strain DS-1 / DSM 13023 / NCIMB 13966).